The following is a 63-amino-acid chain: Transmembrane protein ZNF593OS (63 aa).

A helical membrane pass occupies residues 30–50 (LAGVVATVLAVLGLGGSCYAV).

Its subcellular location is the membrane. The protein is Transmembrane protein ZNF593OS of Homo sapiens (Human).